Here is a 686-residue protein sequence, read N- to C-terminus: XK-related protein 5 (686 aa).

A run of 5 helical transmembrane segments spans residues 33-53 (LLWG…QALS), 205-225 (HFWV…WLVA), 239-259 (LFNL…WDSP), 265-285 (VTFY…ATDF), and 297-317 (IAGV…YYSL). Disordered regions lie at residues 339–387 (GDKT…PPEA), 448–468 (ALSA…LENS), and 490–592 (FASD…APFP). A compositionally biased stretch (basic and acidic residues) spans 340–359 (DKTERRDSPRATDLAGKRTE). Composition is skewed to polar residues over residues 450–468 (SAQQ…LENS) and 490–509 (FASD…TQGE). Residues 523–536 (QGKGTGGQQRGGEG) are compositionally biased toward gly residues. Over residues 550-567 (VATSSQQEGSPATLQTAH) the composition is skewed to polar residues.

The protein belongs to the XK family.

It is found in the cell membrane. The chain is XK-related protein 5 from Homo sapiens (Human).